The following is a 173-amino-acid chain: Shikimate kinase (173 aa).

Position 10–15 (10–15 (GSGKTT)) interacts with ATP. Mg(2+) is bound at residue T14. Substrate-binding residues include D32, R56, and G78. R117 lines the ATP pocket. A substrate-binding site is contributed by R135.

Belongs to the shikimate kinase family. As to quaternary structure, monomer. Requires Mg(2+) as cofactor.

The protein resides in the cytoplasm. The catalysed reaction is shikimate + ATP = 3-phosphoshikimate + ADP + H(+). It participates in metabolic intermediate biosynthesis; chorismate biosynthesis; chorismate from D-erythrose 4-phosphate and phosphoenolpyruvate: step 5/7. Its function is as follows. Catalyzes the specific phosphorylation of the 3-hydroxyl group of shikimic acid using ATP as a cosubstrate. The protein is Shikimate kinase of Limosilactobacillus fermentum (strain NBRC 3956 / LMG 18251) (Lactobacillus fermentum).